Consider the following 302-residue polypeptide: Aliphatic sulfonates import ATP-binding protein SsuB (302 aa).

Residues 30-57 (PATADAQHTADAQHTADAQHTADAQHTA) show a composition bias toward low complexity. The disordered stretch occupies residues 30 to 65 (PATADAQHTADAQHTADAQHTADAQHTAETAETRGA). In terms of domain architecture, ABC transporter spans 70 to 284 (IRIRGLRRTF…RRTDPAFDRL (215 aa)). An ATP-binding site is contributed by 102–109 (GRSGSGKS).

This sequence belongs to the ABC transporter superfamily. Aliphatic sulfonates importer (TC 3.A.1.17.2) family. The complex is composed of two ATP-binding proteins (SsuB), two transmembrane proteins (SsuC) and a solute-binding protein (SsuA).

The protein resides in the cell membrane. It catalyses the reaction ATP + H2O + aliphatic sulfonate-[sulfonate-binding protein]Side 1 = ADP + phosphate + aliphatic sulfonateSide 2 + [sulfonate-binding protein]Side 1.. Its function is as follows. Part of the ABC transporter complex SsuABC involved in aliphatic sulfonates import. Responsible for energy coupling to the transport system. This Frankia casuarinae (strain DSM 45818 / CECT 9043 / HFP020203 / CcI3) protein is Aliphatic sulfonates import ATP-binding protein SsuB.